The following is a 40-amino-acid chain: Spodomicin (40 aa).

3 disulfide bridges follow: Cys6–Cys20, Cys10–Cys32, and Cys21–Cys39.

In terms of assembly, monomer. In terms of processing, contains three disulfide bonds. Hemolymph.

It is found in the secreted. In terms of biological role, fungicide. The protein is Spodomicin of Spodoptera littoralis (Egyptian cotton leafworm).